Here is a 310-residue protein sequence, read N- to C-terminus: Olfactory receptor 2A12 (310 aa).

Residues methionine 1 to leucine 24 are Extracellular-facing. An N-linked (GlcNAc...) asparagine glycan is attached at asparagine 4. A helical transmembrane segment spans residues phenylalanine 25–isoleucine 48. The Cytoplasmic portion of the chain corresponds to tyrosine 49–threonine 56. A helical transmembrane segment spans residues proline 57 to proline 78. The Extracellular portion of the chain corresponds to lysine 79 to glutamine 99. An intrachain disulfide couples cysteine 96 to cysteine 188. Residues threonine 100 to tyrosine 119 form a helical membrane-spanning segment. At aspartate 120–arginine 138 the chain is on the cytoplasmic side. The chain crosses the membrane as a helical span at residues valine 139–valine 157. Residues histidine 158–asparagine 194 are Extracellular-facing. Residues glutamine 195 to leucine 218 form a helical membrane-spanning segment. Over histidine 219–lysine 235 the chain is Cytoplasmic. A helical membrane pass occupies residues alanine 236–tyrosine 258. Residues methionine 259 to lysine 271 are Extracellular-facing. A helical membrane pass occupies residues isoleucine 272–leucine 291. Residues arginine 292–methionine 310 lie on the Cytoplasmic side of the membrane.

Belongs to the G-protein coupled receptor 1 family.

The protein localises to the cell membrane. Its function is as follows. Odorant receptor. The protein is Olfactory receptor 2A12 (OR2A12) of Homo sapiens (Human).